Consider the following 214-residue polypeptide: GTP-binding nuclear protein GSP1/Ran (214 aa).

Residues 4-168 enclose the Small GTPase Ran-type domain; the sequence is EVPTFKLVLV…LWLARKLAGN (165 aa). Residue 15–22 participates in GTP binding; sequence DGGTGKTT. Positions 34–42 are switch-I; sequence KKYIATIGV. Residues Gly-65, 119 to 122, and 147 to 149 each bind GTP; these read NKVD and SAK. Residues 65–81 form a switch-II region; it reads GQEKFGGLRDGYYINAQ.

It belongs to the small GTPase superfamily. Ran family. Found in a nuclear export complex with RanGTP, exportin and pre-miRNA.

Its subcellular location is the nucleus. Functionally, GTP-binding protein involved in nucleocytoplasmic transport. Required for the import of protein into the nucleus and also for RNA export. Involved in chromatin condensation and control of cell cycle. This Eremothecium gossypii (strain ATCC 10895 / CBS 109.51 / FGSC 9923 / NRRL Y-1056) (Yeast) protein is GTP-binding nuclear protein GSP1/Ran (GSP1).